Here is a 380-residue protein sequence, read N- to C-terminus: Carbonic anhydrase 2 (380 aa).

The first 20 residues, 1–20 (MARTGALLLAALALAGCAQA), serve as a signal peptide directing secretion. Positions 38–322 (DHWDHSLNGE…HHHRRLLHNH (285 aa)) constitute an Alpha-carbonic anhydrase domain. Cystine bridges form between Cys61–Cys264, Cys194–Cys198, and Cys296–Cys354. A glycan (N-linked (GlcNAc...) asparagine) is linked at Asn101. His112 functions as the Proton acceptor in the catalytic mechanism. N-linked (GlcNAc...) asparagine glycosylation is present at Asn135. 3 residues coordinate Zn(2+): His163, His165, and His182. 260 to 261 (TT) is a substrate binding site. Asn297 is a glycosylation site (N-linked (GlcNAc...) asparagine).

The protein belongs to the alpha-carbonic anhydrase family. In terms of assembly, tetramer of two large and two small subunits linked by two disulfide bonds. It depends on Zn(2+) as a cofactor.

It localises to the periplasm. The enzyme catalyses hydrogencarbonate + H(+) = CO2 + H2O. Reversible hydration of carbon dioxide. The chain is Carbonic anhydrase 2 (CAH2) from Chlamydomonas reinhardtii (Chlamydomonas smithii).